The sequence spans 292 residues: MKVIPLASESLGVRSLATYVKTKDVGILIDPGVALAPDRYGLKPNDIEFEKLREMRNKINDYAKKSNVITISHYHYDHYTPFFDDIYLESKDYAKELYKDKILLIKHPTEFINKSQMNRAKKFLESVKDIAKKIEFADNKTFKFGKTEIKFSPPFPHGRDDKLGYVLITTVKEGKFKFMHTSDTQGIIFDDIRDYIIKEKPNLILMGGPPTYLMHRYGKKNLEKTNENLKYIVENTGAELIIDHHLLRDKKFREKINVDFKTVAEFLGEKNLLLEAYRKEIKQGKDINELFG.

The protein belongs to the UPF0282 family.

This is UPF0282 protein MJ1629 from Methanocaldococcus jannaschii (strain ATCC 43067 / DSM 2661 / JAL-1 / JCM 10045 / NBRC 100440) (Methanococcus jannaschii).